A 186-amino-acid polypeptide reads, in one-letter code: Calcium-binding protein NCSA (186 aa).

EF-hand domains are found at residues 40–58 (SGTI…MGVG), 66–93 (LFNV…ITRG), 94–129 (TPEE…MYKL), and 142–177 (DPHD…NPDI). Residues Asp-107, Asp-109, Asn-111, Tyr-113, Glu-118, Asp-155, Asp-157, Asp-159, Tyr-161, and Glu-166 each contribute to the Ca(2+) site.

This sequence belongs to the recoverin family.

In terms of biological role, may prevent cells from entering development prematurely in the presence of environmental nutrients. This chain is Calcium-binding protein NCSA (ncsA), found in Dictyostelium discoideum (Social amoeba).